The following is a 235-amino-acid chain: Probable GTP-binding protein EngB (235 aa).

Positions 23–219 constitute an EngB-type G domain; the sequence is QVPEIAFAGR…NDKIIELLGL (197 aa). GTP-binding positions include 31–38, 58–62, 92–95, 159–162, and 193–200; these read GRSNAGKS, GRTQH, DLPG, TKSD, and FTAQMFSA. The Mg(2+) site is built by Ser-38 and Thr-60.

This sequence belongs to the TRAFAC class TrmE-Era-EngA-EngB-Septin-like GTPase superfamily. EngB GTPase family. Mg(2+) serves as cofactor.

Its function is as follows. Necessary for normal cell division and for the maintenance of normal septation. This is Probable GTP-binding protein EngB from Janthinobacterium sp. (strain Marseille) (Minibacterium massiliensis).